We begin with the raw amino-acid sequence, 302 residues long: MAHKLDGKQLAGEIEQRLSHEITLCLKKGVRPPGLAVIRVGDDPASQVYVSNKEKACRRAGIKSFGCHLDANSSFREIEEQIIKLNSNQEVDGILLQLPLPIGLDAGRLLKVIDPRKDADGLHTLNLGRLLKDEIGPRSCTPAGVMALLAANQIEIKGKNTVVIGRSILVGKPMALMLQAANATVTLVHSHTRDLIGFTKQAEILVVAAGKPQLIGLEHVKEKSVVVDVGIHRVFKDQNLGDAGGYKLCGDVRREEVDDFVSAITPVPGGVGPMTVAMLLVNTVNSWQQHCDLSLSLDDLLP.

NADP(+) contacts are provided by residues 165–167 (GRS), serine 190, and isoleucine 231.

It belongs to the tetrahydrofolate dehydrogenase/cyclohydrolase family. Homodimer.

It catalyses the reaction (6R)-5,10-methylene-5,6,7,8-tetrahydrofolate + NADP(+) = (6R)-5,10-methenyltetrahydrofolate + NADPH. It carries out the reaction (6R)-5,10-methenyltetrahydrofolate + H2O = (6R)-10-formyltetrahydrofolate + H(+). It functions in the pathway one-carbon metabolism; tetrahydrofolate interconversion. Functionally, catalyzes the oxidation of 5,10-methylenetetrahydrofolate to 5,10-methenyltetrahydrofolate and then the hydrolysis of 5,10-methenyltetrahydrofolate to 10-formyltetrahydrofolate. The protein is Bifunctional protein FolD of Prochlorococcus marinus (strain MIT 9211).